We begin with the raw amino-acid sequence, 172 residues long: Ribosome maturation factor RimM (172 aa).

The 74-residue stretch at 94-167 folds into the PRC barrel domain; the sequence is ENEFYLFQLK…FIKVELLPGM (74 aa).

Belongs to the RimM family. In terms of assembly, binds ribosomal protein uS19.

It localises to the cytoplasm. In terms of biological role, an accessory protein needed during the final step in the assembly of 30S ribosomal subunit, possibly for assembly of the head region. Essential for efficient processing of 16S rRNA. May be needed both before and after RbfA during the maturation of 16S rRNA. It has affinity for free ribosomal 30S subunits but not for 70S ribosomes. The polypeptide is Ribosome maturation factor RimM (Carboxydothermus hydrogenoformans (strain ATCC BAA-161 / DSM 6008 / Z-2901)).